The primary structure comprises 96 residues: Co-chaperonin GroES 2 (96 aa).

It belongs to the GroES chaperonin family. In terms of assembly, heptamer of 7 subunits arranged in a ring. Interacts with the chaperonin GroEL.

The protein resides in the cytoplasm. Together with the chaperonin GroEL, plays an essential role in assisting protein folding. The GroEL-GroES system forms a nano-cage that allows encapsulation of the non-native substrate proteins and provides a physical environment optimized to promote and accelerate protein folding. GroES binds to the apical surface of the GroEL ring, thereby capping the opening of the GroEL channel. The polypeptide is Co-chaperonin GroES 2 (Vibrio cholerae serotype O1 (strain ATCC 39315 / El Tor Inaba N16961)).